The following is a 374-amino-acid chain: Chaperone protein DnaJ (374 aa).

Residues 5 to 70 (DYYDVLGVAK…DKRAAYDRFG (66 aa)) enclose the J domain. The CR-type zinc finger occupies 131 to 209 (GCEEKIRIPT…CHGQGRVQEY (79 aa)). Zn(2+) contacts are provided by cysteine 144, cysteine 147, cysteine 161, cysteine 164, cysteine 183, cysteine 186, cysteine 197, and cysteine 200. CXXCXGXG motif repeat units lie at residues 144 to 151 (CKTCDGSG), 161 to 168 (CGTCGGAG), 183 to 190 (CPECHGAG), and 197 to 204 (CRDCHGQG).

It belongs to the DnaJ family. In terms of assembly, homodimer. Requires Zn(2+) as cofactor.

Its subcellular location is the cytoplasm. In terms of biological role, participates actively in the response to hyperosmotic and heat shock by preventing the aggregation of stress-denatured proteins and by disaggregating proteins, also in an autonomous, DnaK-independent fashion. Unfolded proteins bind initially to DnaJ; upon interaction with the DnaJ-bound protein, DnaK hydrolyzes its bound ATP, resulting in the formation of a stable complex. GrpE releases ADP from DnaK; ATP binding to DnaK triggers the release of the substrate protein, thus completing the reaction cycle. Several rounds of ATP-dependent interactions between DnaJ, DnaK and GrpE are required for fully efficient folding. Also involved, together with DnaK and GrpE, in the DNA replication of plasmids through activation of initiation proteins. The protein is Chaperone protein DnaJ of Marinomonas sp. (strain MWYL1).